A 241-amino-acid polypeptide reads, in one-letter code: 1-(5-phosphoribosyl)-5-[(5-phosphoribosylamino)methylideneamino] imidazole-4-carboxamide isomerase (241 aa).

The active-site Proton acceptor is the aspartate 8. Catalysis depends on aspartate 127, which acts as the Proton donor.

This sequence belongs to the HisA/HisF family.

The protein resides in the cytoplasm. It catalyses the reaction 1-(5-phospho-beta-D-ribosyl)-5-[(5-phospho-beta-D-ribosylamino)methylideneamino]imidazole-4-carboxamide = 5-[(5-phospho-1-deoxy-D-ribulos-1-ylimino)methylamino]-1-(5-phospho-beta-D-ribosyl)imidazole-4-carboxamide. Its pathway is amino-acid biosynthesis; L-histidine biosynthesis; L-histidine from 5-phospho-alpha-D-ribose 1-diphosphate: step 4/9. The polypeptide is 1-(5-phosphoribosyl)-5-[(5-phosphoribosylamino)methylideneamino] imidazole-4-carboxamide isomerase (Thermotoga petrophila (strain ATCC BAA-488 / DSM 13995 / JCM 10881 / RKU-1)).